A 151-amino-acid chain; its full sequence is uncharacterized protein (151 aa).

Residues 40-57 (QMNRRNSENNTFDASNVG) are compositionally biased toward polar residues. The disordered stretch occupies residues 40–125 (QMNRRNSENN…KRQPHYAEPI (86 aa)). The span at 83–110 (QRQNGRQHQHAGQQQPQHQHTQSQTRQT) shows a compositional bias: low complexity.

This is an uncharacterized protein from Bacillus subtilis (strain 168).